A 454-amino-acid polypeptide reads, in one-letter code: Guanine deaminase (454 aa).

Zn(2+) is bound by residues H82 and H84. Residues 84 to 87 (HASQ), 213 to 214 (RF), 240 to 243 (HISE), and D330 contribute to the substrate site. Residues H240 and D330 each coordinate Zn(2+). S453 carries the post-translational modification Phosphoserine.

Belongs to the metallo-dependent hydrolases superfamily. ATZ/TRZ family. As to quaternary structure, homodimer. The cofactor is Zn(2+).

It catalyses the reaction guanine + H2O + H(+) = xanthine + NH4(+). It participates in purine metabolism; guanine degradation; xanthine from guanine: step 1/1. Its function is as follows. Catalyzes the hydrolytic deamination of guanine, producing xanthine and ammonia. The polypeptide is Guanine deaminase (Homo sapiens (Human)).